A 195-amino-acid polypeptide reads, in one-letter code: Large ribosomal subunit protein bL25 (195 aa).

Belongs to the bacterial ribosomal protein bL25 family. CTC subfamily. As to quaternary structure, part of the 50S ribosomal subunit; part of the 5S rRNA/L5/L18/L25 subcomplex. Contacts the 5S rRNA. Binds to the 5S rRNA independently of L5 and L18.

In terms of biological role, this is one of the proteins that binds to the 5S RNA in the ribosome where it forms part of the central protuberance. The polypeptide is Large ribosomal subunit protein bL25 (Chlorobium chlorochromatii (strain CaD3)).